We begin with the raw amino-acid sequence, 110 residues long: Ig kappa chain V region 2717 (110 aa).

Residues 1–23 are framework-1; it reads VEVLTQTPSPVSAAVGGTVTISC. The tract at residues 24-36 is complementarity-determining-1; the sequence is QSTKSIYBBBYLA. The segment at 37-51 is framework-2; sequence WYQZKPGQPPKALIY. Residues 52 to 58 are complementarity-determining-2; it reads TASSLAS. The tract at residues 59–90 is framework-3; that stretch reads GVPSRFTGSGSGTZFTLTLSDVZCDDAATYYC. Positions 91-99 are complementarity-determining-3; that stretch reads GGADYTGYS. Residues 100–109 are framework-4; that stretch reads FGGGTEVVVK.

This Oryctolagus cuniculus (Rabbit) protein is Ig kappa chain V region 2717.